Reading from the N-terminus, the 378-residue chain is Peptide chain release factor RF2 (378 aa).

At glutamine 253 the chain carries N5-methylglutamine.

The protein belongs to the prokaryotic/mitochondrial release factor family. In terms of assembly, interacts with the ribosome. Interacts with ribosomal protein L11. Recruited to stalled E.coli ribosomes by E.coli ArfA.

It localises to the cytoplasm. Functionally, peptide chain release factor 2 directs the termination of translation in response to the peptide chain termination codons UGA and UAA. In endogenous ribosomes interacts with P-site tRNA and 23S rRNA. In the presence of truncated mRNA in the 70S ribosome, ArfA and RF2 interact such that the GGQ peptide hydrolysis motif of RF2 rises into the peptidyl-transferase center and releases the ribosome. Recruited to stalled E.coli 70S ribosomes by E.coli ArfA, but cannot be functionally accomodated in the peptidyl-transferase center. Note T.thermophilus probably does not encode arfA. The polypeptide is Peptide chain release factor RF2 (prfB) (Thermus thermophilus (strain ATCC 27634 / DSM 579 / HB8)).